Reading from the N-terminus, the 134-residue chain is Large ribosomal subunit protein uL16c (134 aa).

Belongs to the universal ribosomal protein uL16 family. Part of the 50S ribosomal subunit.

The protein localises to the plastid. Its subcellular location is the chloroplast. In Pinus koraiensis (Korean pine), this protein is Large ribosomal subunit protein uL16c.